We begin with the raw amino-acid sequence, 227 residues long: GTPase ERas (227 aa).

The segment covering 1–19 (MALPTKSSILDLSSGTPCT) has biased composition (polar residues). A disordered region spans residues 1 to 25 (MALPTKSSILDLSSGTPCTRSPEES). A GTP-binding site is contributed by 48–55 (GASGVGKS). An Effector region motif is present at residues 70–78 (HDPTIQDSY). Residues 95 to 99 (DTSGQ) and 151 to 154 (NKCD) contribute to the GTP site. S-palmitoyl cysteine attachment occurs at residues C220 and C222. C224 bears the Cysteine methyl ester mark. The S-farnesyl cysteine moiety is linked to residue C224. The propeptide at 225-227 (SVA) is removed in mature form.

The protein belongs to the small GTPase superfamily. Ras family. As to quaternary structure, interacts with PIK3CD. Expressed in several undifferentiated mouse embryonic stem cell lines.

It localises to the cell membrane. The enzyme catalyses GTP + H2O = GDP + phosphate + H(+). Alternates between an inactive form bound to GDP and an active form bound to GTP. Activated by a guanine nucleotide-exchange factor (GEF) and inactivated by a GTPase-activating protein (GAP). Ras proteins bind GDP/GTP and possess intrinsic GTPase activity. Plays an important role in the tumor-like growth properties of embryonic stem cells. This is GTPase ERas (Eras) from Mus musculus (Mouse).